Here is a 110-residue protein sequence, read N- to C-terminus: Progonadoliberin-2 (110 aa).

The first 26 residues, 1-26, serve as a signal peptide directing secretion; it reads MASIGQGLVLLLLLLLLTAQPGPLKA. The tract at residues 25–85 is disordered; sequence KAQHWSHGWY…KALAPPEDTV (61 aa). Glycine amide is present on G36.

The protein belongs to the GnRH family. Midbrain.

The protein localises to the secreted. Stimulates the secretion of gonadotropins; it stimulates the secretion of both luteinizing and follicle-stimulating hormones. The sequence is that of Progonadoliberin-2 (GNRH2) from Suncus murinus (Asian house shrew).